A 354-amino-acid chain; its full sequence is Uroporphyrinogen decarboxylase (354 aa).

Substrate-binding positions include 27 to 31 (RQAGR), Phe46, Asp77, Tyr153, Thr208, and His326.

The protein belongs to the uroporphyrinogen decarboxylase family. In terms of assembly, homodimer.

It localises to the cytoplasm. It catalyses the reaction uroporphyrinogen III + 4 H(+) = coproporphyrinogen III + 4 CO2. It functions in the pathway porphyrin-containing compound metabolism; protoporphyrin-IX biosynthesis; coproporphyrinogen-III from 5-aminolevulinate: step 4/4. Its function is as follows. Catalyzes the decarboxylation of four acetate groups of uroporphyrinogen-III to yield coproporphyrinogen-III. In Neisseria meningitidis serogroup A / serotype 4A (strain DSM 15465 / Z2491), this protein is Uroporphyrinogen decarboxylase.